The following is a 90-amino-acid chain: DNA-binding protein HU-alpha (90 aa).

Belongs to the bacterial histone-like protein family. Heterodimer of an alpha and a beta chain.

Its function is as follows. Histone-like DNA-binding protein which is capable of wrapping DNA to stabilize it, and thus to prevent its denaturation under extreme environmental conditions. This Pseudomonas aeruginosa (strain ATCC 15692 / DSM 22644 / CIP 104116 / JCM 14847 / LMG 12228 / 1C / PRS 101 / PAO1) protein is DNA-binding protein HU-alpha (hupA).